The primary structure comprises 1786 residues: uncharacterized protein (1786 aa).

3 disordered regions span residues 140-191 (QGLR…LPEA), 203-329 (RRES…RGGV), and 400-480 (GGSD…TPPE). Polar residues predominate over residues 149–158 (SDMNSQTSLT). The segment covering 232–247 (GHAPEAPAPGESPASS) has biased composition (low complexity). A compositionally biased stretch (polar residues) spans 248–259 (QCLPSQACENDF). The span at 306–329 (TSCRQHREEAGDRAGAGEDKRGGV) shows a compositional bias: basic and acidic residues. The span at 422-438 (STTPSTNTTRTPSPISS) shows a compositional bias: low complexity. The segment covering 467-480 (VPPPTGPGTATPPE) has biased composition (pro residues). Thr721 is modified (phosphothreonine). Disordered stretches follow at residues 746–907 (SESK…SDGH), 1081–1180 (VRDV…NSSP), 1218–1242 (ASAQ…PKPA), 1291–1348 (KEGV…VSAR), 1362–1460 (SLYI…NSDC), and 1477–1550 (LLGR…EHTP). Composition is skewed to basic and acidic residues over residues 810–828 (MQRE…DTSH) and 845–861 (KPWE…HSEA). Over residues 1105 to 1115 (KGSGDSSDKGS) the composition is skewed to low complexity. A compositionally biased stretch (polar residues) spans 1131–1140 (TPASGGSRSL). Residues 1153–1164 (PREEGVDREPRE) show a composition bias toward basic and acidic residues. Residues 1167-1180 (SQVSNGGRLLNSSP) show a composition bias toward polar residues. At Ser1179 the chain carries Phosphoserine. Basic and acidic residues-rich tracts occupy residues 1223–1238 (TPEK…EGKA) and 1301–1319 (DPDK…DTGH). 3 stretches are compositionally biased toward polar residues: residues 1336–1345 (RNSNPSTESV), 1389–1401 (NVFT…TQKT), and 1504–1521 (ARSQ…SGTS). Arg1767 carries the post-translational modification Omega-N-methylarginine.

This is an uncharacterized protein from Mus musculus (Mouse).